Reading from the N-terminus, the 487-residue chain is N-succinylglutamate 5-semialdehyde dehydrogenase (487 aa).

The disordered stretch occupies residues 1–23 (MTHFIKGQWQAGKGHDVTSSNPA). Residue 220 to 225 (GSSRTG) participates in NAD(+) binding. Catalysis depends on residues Glu243 and Cys277.

Belongs to the aldehyde dehydrogenase family. AstD subfamily.

It catalyses the reaction N-succinyl-L-glutamate 5-semialdehyde + NAD(+) + H2O = N-succinyl-L-glutamate + NADH + 2 H(+). Its pathway is amino-acid degradation; L-arginine degradation via AST pathway; L-glutamate and succinate from L-arginine: step 4/5. In terms of biological role, catalyzes the NAD-dependent reduction of succinylglutamate semialdehyde into succinylglutamate. This is N-succinylglutamate 5-semialdehyde dehydrogenase from Shewanella sp. (strain ANA-3).